Here is a 175-residue protein sequence, read N- to C-terminus: MATALVLGYSAFDLGLFSDKDPRLKLIKKAIRKDLEAMAADGVSWLVFTGSLGFEYWVLEVAQEMKTEYGFQLATIFAFETHGENWNEGNQMKLSRFKQVDFVKYAYPRYEHKGQLRDYQQFLLENTTSSYLFYDEENETKLAYFYQKMKNQEDYFIKRLTFDELNELAENFSEN.

Belongs to the UPF0398 family.

This is UPF0398 protein SPP_0409 from Streptococcus pneumoniae (strain P1031).